The following is a 159-amino-acid chain: Phosphopantetheine adenylyltransferase (159 aa).

Thr9 is a binding site for substrate. ATP contacts are provided by residues 9 to 10 and His17; that span reads TF. Residues Lys41, Leu73, and Arg87 each contribute to the substrate site. ATP contacts are provided by residues 88-90, Glu98, and 123-129; these read GLR and YSFISST.

The protein belongs to the bacterial CoaD family. Homohexamer. Requires Mg(2+) as cofactor.

It localises to the cytoplasm. The catalysed reaction is (R)-4'-phosphopantetheine + ATP + H(+) = 3'-dephospho-CoA + diphosphate. It functions in the pathway cofactor biosynthesis; coenzyme A biosynthesis; CoA from (R)-pantothenate: step 4/5. Its function is as follows. Reversibly transfers an adenylyl group from ATP to 4'-phosphopantetheine, yielding dephospho-CoA (dPCoA) and pyrophosphate. This chain is Phosphopantetheine adenylyltransferase, found in Pseudomonas syringae pv. tomato (strain ATCC BAA-871 / DC3000).